The following is a 376-amino-acid chain: Chaperone protein DnaJ (376 aa).

In terms of domain architecture, J spans 5–70; that stretch reads DYYEILGVSK…QKRAAYDQYG (66 aa). The segment at 131–209 adopts a CR-type zinc-finger fold; sequence GVTKEIRIPT…CHGHGRVERS (79 aa). The Zn(2+) site is built by C144, C147, C161, C164, C183, C186, C197, and C200. CXXCXGXG motif repeat units follow at residues 144-151, 161-168, 183-190, and 197-204; these read CDVCHGSG, CPTCHGSG, CPHCQGRG, and CNKCHGHG.

Belongs to the DnaJ family. In terms of assembly, homodimer. It depends on Zn(2+) as a cofactor.

It is found in the cytoplasm. Its function is as follows. Participates actively in the response to hyperosmotic and heat shock by preventing the aggregation of stress-denatured proteins and by disaggregating proteins, also in an autonomous, DnaK-independent fashion. Unfolded proteins bind initially to DnaJ; upon interaction with the DnaJ-bound protein, DnaK hydrolyzes its bound ATP, resulting in the formation of a stable complex. GrpE releases ADP from DnaK; ATP binding to DnaK triggers the release of the substrate protein, thus completing the reaction cycle. Several rounds of ATP-dependent interactions between DnaJ, DnaK and GrpE are required for fully efficient folding. Also involved, together with DnaK and GrpE, in the DNA replication of plasmids through activation of initiation proteins. The sequence is that of Chaperone protein DnaJ from Shigella dysenteriae serotype 1 (strain Sd197).